The primary structure comprises 121 residues: Putative RNase MJ0127 (121 aa).

Active-site residues include arginine 76 and histidine 81. The RX(4)HXY motif motif lies at 76–83 (RDKLIHHY). Tyrosine 83 bears the O-di-AMP-tyrosine mark.

It belongs to the HepT RNase toxin family. In terms of assembly, homodimer, probably forms a complex with cognate antitoxin MJ0128. Post-translationally, modified by cognate antitoxin MJ0128; probably at least 2 successive AMPylation events occur on Tyr-83.

In terms of biological role, probable toxic component of a putative type VII toxin-antitoxin (TA) system, probably an RNase. Probably neutralized by cognate antitoxin MJ0128. Neutralization may be due to AMPylation by MJ0128. The sequence is that of Putative RNase MJ0127 from Methanocaldococcus jannaschii (strain ATCC 43067 / DSM 2661 / JAL-1 / JCM 10045 / NBRC 100440) (Methanococcus jannaschii).